A 201-amino-acid chain; its full sequence is MIGRLRGTLAEKQPPHMILDVNGIGYEVEVPMTTLYRLPAVGEPVTLHTHLVVREDAQLLYGFAEKRERELFRELIRLNGVGPKLALALMSGLEVDELVRCVQAQDTSVLVRIPGVGKKTAERLLVELKDRFKAWESMPAIATLVVEPGSKTAVTSAENDAVSALISLGFKPQEASRAVSAIQEENLSSEEMIRRALKGMV.

Positions 1–64 are domain I; sequence MIGRLRGTLA…EDAQLLYGFA (64 aa). The segment at 65–143 is domain II; it reads EKRERELFRE…AWESMPAIAT (79 aa). The tract at residues 144–152 is flexible linker; the sequence is LVVEPGSKT. The interval 153–201 is domain III; it reads AVTSAENDAVSALISLGFKPQEASRAVSAIQEENLSSEEMIRRALKGMV.

Belongs to the RuvA family. Homotetramer. Forms an RuvA(8)-RuvB(12)-Holliday junction (HJ) complex. HJ DNA is sandwiched between 2 RuvA tetramers; dsDNA enters through RuvA and exits via RuvB. An RuvB hexamer assembles on each DNA strand where it exits the tetramer. Each RuvB hexamer is contacted by two RuvA subunits (via domain III) on 2 adjacent RuvB subunits; this complex drives branch migration. In the full resolvosome a probable DNA-RuvA(4)-RuvB(12)-RuvC(2) complex forms which resolves the HJ.

It localises to the cytoplasm. Functionally, the RuvA-RuvB-RuvC complex processes Holliday junction (HJ) DNA during genetic recombination and DNA repair, while the RuvA-RuvB complex plays an important role in the rescue of blocked DNA replication forks via replication fork reversal (RFR). RuvA specifically binds to HJ cruciform DNA, conferring on it an open structure. The RuvB hexamer acts as an ATP-dependent pump, pulling dsDNA into and through the RuvAB complex. HJ branch migration allows RuvC to scan DNA until it finds its consensus sequence, where it cleaves and resolves the cruciform DNA. This is Holliday junction branch migration complex subunit RuvA from Stutzerimonas stutzeri (strain A1501) (Pseudomonas stutzeri).